The sequence spans 452 residues: UDP-N-acetylmuramoyl-tripeptide--D-alanyl-D-alanine ligase (452 aa).

ATP is bound at residue 107-113; it reads GSSGKTS.

The protein belongs to the MurCDEF family. MurF subfamily. Monomer.

The protein resides in the cytoplasm. It carries out the reaction D-alanyl-D-alanine + UDP-N-acetyl-alpha-D-muramoyl-L-alanyl-gamma-D-glutamyl-meso-2,6-diaminopimelate + ATP = UDP-N-acetyl-alpha-D-muramoyl-L-alanyl-gamma-D-glutamyl-meso-2,6-diaminopimeloyl-D-alanyl-D-alanine + ADP + phosphate + H(+). The protein operates within cell wall biogenesis; peptidoglycan biosynthesis. Functionally, involved in cell wall formation. Catalyzes the final step in the synthesis of UDP-N-acetylmuramoyl-pentapeptide, the precursor of murein. In Escherichia coli (strain K12), this protein is UDP-N-acetylmuramoyl-tripeptide--D-alanyl-D-alanine ligase.